A 275-amino-acid polypeptide reads, in one-letter code: MPELPEVQTIVDYLNHHVLDIFIKKTIVHLPKILKNKTPQEFEKLLINHKIVKIKRLGKYLLFFLSNNLVLSVHLRMEGKFYYQAKEEWFNLAHTHIIIEFNNGMQLRYNDTRQFGTFHIYEQQSFLDSKELKKIALDPLDNNFSAQYLYEKLKKSNKAIKTALLDQSVVSGIGNIYADEILFAAKIFPTILAKNLTLKNYEKITKEAQRILLLSIKNKGTTIHTYKFGNDETGLFQKMLLVHTHAKEPCQICGTIIQKTKVNGRGTYYCPNCQN.

Pro2 (schiff-base intermediate with DNA) is an active-site residue. Glu3 (proton donor) is an active-site residue. Lys59 serves as the catalytic Proton donor; for beta-elimination activity. DNA is bound by residues His94 and Arg113. An FPG-type zinc finger spans residues Leu241–Asn275. Arg265 functions as the Proton donor; for delta-elimination activity in the catalytic mechanism.

Belongs to the FPG family. As to quaternary structure, monomer. Zn(2+) is required as a cofactor.

It carries out the reaction Hydrolysis of DNA containing ring-opened 7-methylguanine residues, releasing 2,6-diamino-4-hydroxy-5-(N-methyl)formamidopyrimidine.. The catalysed reaction is 2'-deoxyribonucleotide-(2'-deoxyribose 5'-phosphate)-2'-deoxyribonucleotide-DNA = a 3'-end 2'-deoxyribonucleotide-(2,3-dehydro-2,3-deoxyribose 5'-phosphate)-DNA + a 5'-end 5'-phospho-2'-deoxyribonucleoside-DNA + H(+). In terms of biological role, involved in base excision repair of DNA damaged by oxidation or by mutagenic agents. Acts as a DNA glycosylase that recognizes and removes damaged bases. Has a preference for oxidized purines, such as 7,8-dihydro-8-oxoguanine (8-oxoG). Has AP (apurinic/apyrimidinic) lyase activity and introduces nicks in the DNA strand. Cleaves the DNA backbone by beta-delta elimination to generate a single-strand break at the site of the removed base with both 3'- and 5'-phosphates. This chain is Formamidopyrimidine-DNA glycosylase, found in Ureaplasma parvum serovar 3 (strain ATCC 700970).